The chain runs to 377 residues: Chaperone protein DnaJ (377 aa).

Positions 4–69 constitute a J domain; that stretch reads DYYEALGVTR…QKRAAYDRFG (66 aa). The CR-type zinc finger occupies 135–213; the sequence is GKTAQIRVPT…CHGQGRVTQE (79 aa). Positions 148, 151, 165, 168, 187, 190, 201, and 204 each coordinate Zn(2+). CXXCXGXG motif repeat units lie at residues 148-155, 165-172, 187-194, and 201-208; these read CDECSGSG, CTMCSGSG, CPGCNGRG, and CEKCHGQG.

This sequence belongs to the DnaJ family. In terms of assembly, homodimer. Requires Zn(2+) as cofactor.

It is found in the cytoplasm. In terms of biological role, participates actively in the response to hyperosmotic and heat shock by preventing the aggregation of stress-denatured proteins and by disaggregating proteins, also in an autonomous, DnaK-independent fashion. Unfolded proteins bind initially to DnaJ; upon interaction with the DnaJ-bound protein, DnaK hydrolyzes its bound ATP, resulting in the formation of a stable complex. GrpE releases ADP from DnaK; ATP binding to DnaK triggers the release of the substrate protein, thus completing the reaction cycle. Several rounds of ATP-dependent interactions between DnaJ, DnaK and GrpE are required for fully efficient folding. Also involved, together with DnaK and GrpE, in the DNA replication of plasmids through activation of initiation proteins. In Brucella ovis (strain ATCC 25840 / 63/290 / NCTC 10512), this protein is Chaperone protein DnaJ.